A 292-amino-acid polypeptide reads, in one-letter code: 4-hydroxy-tetrahydrodipicolinate synthase (292 aa).

Position 45 (T45) interacts with pyruvate. The active-site Proton donor/acceptor is Y133. Catalysis depends on K161, which acts as the Schiff-base intermediate with substrate. I203 is a binding site for pyruvate.

This sequence belongs to the DapA family. As to quaternary structure, homodimer.

The protein resides in the cytoplasm. It catalyses the reaction L-aspartate 4-semialdehyde + pyruvate = (2S,4S)-4-hydroxy-2,3,4,5-tetrahydrodipicolinate + H2O + H(+). The protein operates within amino-acid biosynthesis; L-lysine biosynthesis via DAP pathway; (S)-tetrahydrodipicolinate from L-aspartate: step 3/4. Its function is as follows. Catalyzes the condensation of (S)-aspartate-beta-semialdehyde [(S)-ASA] and pyruvate to 4-hydroxy-tetrahydrodipicolinate (HTPA). This Pseudomonas savastanoi pv. phaseolicola (strain 1448A / Race 6) (Pseudomonas syringae pv. phaseolicola (strain 1448A / Race 6)) protein is 4-hydroxy-tetrahydrodipicolinate synthase.